We begin with the raw amino-acid sequence, 111 residues long: Large ribosomal subunit protein uL23 (111 aa).

This sequence belongs to the universal ribosomal protein uL23 family. In terms of assembly, part of the 50S ribosomal subunit. Contacts protein L29, and trigger factor when it is bound to the ribosome.

Its function is as follows. One of the early assembly proteins it binds 23S rRNA. One of the proteins that surrounds the polypeptide exit tunnel on the outside of the ribosome. Forms the main docking site for trigger factor binding to the ribosome. The sequence is that of Large ribosomal subunit protein uL23 from Chlamydia trachomatis serovar A (strain ATCC VR-571B / DSM 19440 / HAR-13).